The following is a 263-amino-acid chain: Proliferating cell nuclear antigen (263 aa).

A DNA-binding region spans residues 61 to 80 (RCDRNLSMGMNLNNMAKMLR).

Belongs to the PCNA family.

Its subcellular location is the nucleus. In terms of biological role, this protein is an auxiliary protein of DNA polymerase delta and is involved in the control of eukaryotic DNA replication by increasing the polymerase's processibility during elongation of the leading strand. This chain is Proliferating cell nuclear antigen (PCNA), found in Zea mays (Maize).